A 571-amino-acid polypeptide reads, in one-letter code: Methionine--tRNA ligase (571 aa).

Positions 10–20 match the 'HIGH' region motif; the sequence is PYVNAVPHLGN. The Zn(2+) site is built by cysteine 143, cysteine 146, cysteine 156, and cysteine 159. The short motif at 333–337 is the 'KMSKS' region element; that stretch reads KFSKS. Lysine 336 is an ATP binding site.

It belongs to the class-I aminoacyl-tRNA synthetase family. MetG type 1 subfamily. Requires Zn(2+) as cofactor.

It is found in the cytoplasm. The enzyme catalyses tRNA(Met) + L-methionine + ATP = L-methionyl-tRNA(Met) + AMP + diphosphate. In terms of biological role, is required not only for elongation of protein synthesis but also for the initiation of all mRNA translation through initiator tRNA(fMet) aminoacylation. The chain is Methionine--tRNA ligase from Sulfolobus acidocaldarius (strain ATCC 33909 / DSM 639 / JCM 8929 / NBRC 15157 / NCIMB 11770).